A 335-amino-acid chain; its full sequence is Probable peroxidase 26 (335 aa).

A signal peptide spans 1–18 (MVMIHIFLTVMVVGGVSL). Intrachain disulfides connect cysteine 46-cysteine 122, cysteine 79-cysteine 84, cysteine 128-cysteine 331, and cysteine 205-cysteine 237. The active site involves arginine 73. Ca(2+) is bound by residues aspartate 78, valine 81, glycine 83, aspartate 85, and serine 87. Residue proline 168 participates in substrate binding. Residue histidine 198 coordinates heme b. Serine 199 contacts Ca(2+). The N-linked (GlcNAc...) asparagine glycan is linked to asparagine 216. Ca(2+) is bound by residues aspartate 255 and serine 258. Asparagine 259 and asparagine 273 each carry an N-linked (GlcNAc...) asparagine glycan.

This sequence belongs to the peroxidase family. Classical plant (class III) peroxidase subfamily. Heme b is required as a cofactor. Requires Ca(2+) as cofactor.

It is found in the secreted. It carries out the reaction 2 a phenolic donor + H2O2 = 2 a phenolic radical donor + 2 H2O. In terms of biological role, removal of H(2)O(2), oxidation of toxic reductants, biosynthesis and degradation of lignin, suberization, auxin catabolism, response to environmental stresses such as wounding, pathogen attack and oxidative stress. The enzyme activity has to be proved. This is Probable peroxidase 26 (PER26) from Arabidopsis thaliana (Mouse-ear cress).